The sequence spans 143 residues: Sirohydrochlorin cobaltochelatase (143 aa).

Residue H9 is the Proton acceptor of the active site. Residue H9 participates in Co(2+) binding. H9 contributes to the Ni(2+) binding site. Residues E45 and 70–75 (LAHGVH) contribute to the substrate site. H75 provides a ligand contact to Co(2+). H75 provides a ligand contact to Ni(2+).

The protein belongs to the CbiX family. CbiXS subfamily. As to quaternary structure, homotetramer; dimer of dimers.

It carries out the reaction Co-sirohydrochlorin + 2 H(+) = sirohydrochlorin + Co(2+). It catalyses the reaction Ni-sirohydrochlorin + 2 H(+) = sirohydrochlorin + Ni(2+). It participates in cofactor biosynthesis; adenosylcobalamin biosynthesis; cob(II)yrinate a,c-diamide from sirohydrochlorin (anaerobic route): step 1/10. Functionally, catalyzes the insertion of Co(2+) into sirohydrochlorin as part of the anaerobic pathway to cobalamin biosynthesis. Involved in the biosynthesis of the unique nickel-containing tetrapyrrole coenzyme F430, the prosthetic group of methyl-coenzyme M reductase (MCR), which plays a key role in methanogenesis and anaerobic methane oxidation. Catalyzes the insertion of Ni(2+) into sirohydrochlorin to yield Ni-sirohydrochlorin. This chain is Sirohydrochlorin cobaltochelatase, found in Methanopyrus kandleri (strain AV19 / DSM 6324 / JCM 9639 / NBRC 100938).